The primary structure comprises 79 residues: Moronecidin (79 aa).

An N-terminal signal peptide occupies residues 1 to 22 (MKCATLSLVLSMVVLMAEPGDA). Glycine amide is present on Gly-44. A disordered region spans residues 45 to 68 (GKAEQDQQDQQYQQDQQDQQAQQY). The propeptide occupies 47–79 (AEQDQQDQQYQQDQQDQQAQQYQRFNRERAAFD). The segment covering 52–68 (QDQQYQQDQQDQQAQQY) has biased composition (low complexity).

As to expression, expressed in gill, skin, intestine, spleen, anterior kidney, and blood cells.

Its subcellular location is the secreted. Antimicrobial peptide with broad-spectrum activity against Gram-positive and Gram-negative bacteria as well as against a variety of fungi. Rapidly inactivates both channel catfish herpesvirus (ED(50)=4 uM) and frog virus 3 (ED(50)=13 uM) over a wide temperature range. Seems to disrupt the membranes by adopting an alpha helical conformation. In Morone chrysops (White bass), this protein is Moronecidin.